We begin with the raw amino-acid sequence, 193 residues long: Epididymal-specific lipocalin-12 (193 aa).

The signal sequence occupies residues M1 to G19. C88 and C193 form a disulfide bridge. N-linked (GlcNAc...) asparagine glycosylation is found at N143 and N172.

It belongs to the calycin superfamily. Lipocalin family. In terms of assembly, monomer.

It localises to the secreted. In terms of biological role, binds all-trans retinoic acid and may act as a retinoid carrier protein within the epididymis. May play a role in male fertility. The chain is Epididymal-specific lipocalin-12 (Lcn12) from Rattus norvegicus (Rat).